The following is a 692-amino-acid chain: Vacuolar amino acid transporter 3 (692 aa).

A compositionally biased stretch (polar residues) spans methionine 1 to glutamine 14. The tract at residues methionine 1 to leucine 71 is disordered. Over residues serine 15–glycine 24 the composition is skewed to low complexity. The span at glycine 28–threonine 38 shows a compositional bias: polar residues. A phosphoserine mark is found at serine 59, serine 119, and serine 121. Disordered stretches follow at residues lysine 135 to lysine 170 and aspartate 258 to proline 294. Over residues proline 141–proline 153 the composition is skewed to low complexity. Residues alanine 154–serine 167 show a composition bias toward polar residues. Serine 165 bears the Phosphoserine mark. Over residues aspartate 258–glutamate 279 the composition is skewed to acidic residues. The next 11 helical transmembrane spans lie at alanine 302 to phenylalanine 322, phenylalanine 329 to isoleucine 349, phenylalanine 374 to phenylalanine 394, glycine 412 to leucine 432, alanine 443 to tyrosine 463, tryptophan 483 to isoleucine 503, alanine 519 to phenylalanine 539, valine 561 to isoleucine 581, tyrosine 607 to leucine 627, phenylalanine 630 to leucine 650, and leucine 665 to glutamine 685.

Belongs to the amino acid/polyamine transporter 2 family.

The protein resides in the vacuole membrane. Involved in amino acid efflux from the vacuole to the cytoplasm. Capable of transporting large neutral amino acids including tyrosine, glutamine, asparagine, isoleucine and leucine. In Saccharomyces cerevisiae (strain ATCC 204508 / S288c) (Baker's yeast), this protein is Vacuolar amino acid transporter 3 (AVT3).